The following is an 811-amino-acid chain: Hypoxia-inducible factor 1-alpha (811 aa).

Residues 1 to 27 (MDSPGGVTDKKRISSERRKEKSRDAAR) form a disordered region. Basic and acidic residues predominate over residues 8 to 27 (TDKKRISSERRKEKSRDAAR). Positions 17-70 (RRKEKSRDAARCRRSKESEVFYELAHQLPLPHTVSAHLDKASIMRLTISYLRMR) constitute a bHLH domain. 2 consecutive PAS domains span residues 80-157 (TEAN…PVKK) and 228-298 (PHPS…FTKG). Residues 302-345 (TGQYRMLAKQGGYVWVETQATVIYNTKNSQPQCIVCVNYVLSGI) form the PAC domain. Positions 401–587 (APAAGDTIIS…LSPLESSSSG (187 aa)) are ODD. Pro402 bears the 4-hydroxyproline mark. The disordered stretch occupies residues 490–518 (PQVQEQPTSPSDASTSQSSPEPSSPNDYC). Positions 496–514 (PTSPSDASTSQSSPEPSSP) are enriched in low complexity. Residues 529–573 (FKLELVEKLFAIDTEAKNPFSTQETDLDLEMLAPYIPMDDDFQLR) are NTAD. A 4-hydroxyproline modification is found at Pro562. Residues 576–785 (DQLSPLESSS…GLPQLTSYDC (210 aa)) are ID. A compositionally biased stretch (polar residues) spans 634 to 652 (NDTSSAPASPYSGNRSRTA). The disordered stretch occupies residues 634–655 (NDTSSAPASPYSGNRSRTASPI). 2 short sequence motifs (nuclear localization signal) span residues 703 to 706 (RKRK) and 718 to 721 (GIGS). Residues 771 to 811 (SMDESGLPQLTSYDCEVNAPIQGNRNLLQGEELLRALDQVN) are CTAD. Residue Asn788 is modified to (3S)-3-hydroxyasparagine.

As to quaternary structure, efficient DNA binding requires heterodimerization of an alpha and a beta/ARNT subunit. Post-translationally, in normoxia, is hydroxylated on Pro-402 and Pro-562. The hydroxylated prolines promote interaction with VHL, initiating rapid ubiquitination and subsequent proteasomal degradation. Under hypoxia, proline hydroxylation is impaired and ubiquitination is attenuated, resulting in stabilization. In normoxia, is hydroxylated on Asn-788, thus abrogating interaction with CREBBP and EP300 and preventing transcriptional activation. In terms of processing, the iron and 2-oxoglutarate dependent 3-hydroxylation of asparagine is (S) stereospecific within HIF CTAD domains.

It localises to the cytoplasm. Its subcellular location is the nucleus. It is found in the nucleus speckle. Its activity is regulated as follows. Induced by reactive oxygen species (ROS). Functions as a master transcriptional regulator of the adaptive response to hypoxia. Under hypoxic conditions, activates the transcription of over 40 genes, including erythropoietin, glucose transporters, glycolytic enzymes, vascular endothelial growth factor, HILPDA, and other genes whose protein products increase oxygen delivery or facilitate metabolic adaptation to hypoxia. Plays an essential role in embryonic vascularization, tumor angiogenesis and pathophysiology of ischemic disease. The polypeptide is Hypoxia-inducible factor 1-alpha (HIF1A) (Gallus gallus (Chicken)).